We begin with the raw amino-acid sequence, 132 residues long: Dormancy-associated protein 1 (132 aa).

A disordered region spans residues 53–76 (MPAAVSPGTPTTPTTPTTPRKDNV). Low complexity predominate over residues 61-70 (TPTTPTTPTT). The residue at position 64 (Thr-64) is a Phosphothreonine.

This sequence belongs to the DRM1/ARP family. As to expression, isoform 1: Expressed mainly in the low bolt. Isoform 2: Expressed mainly in the low bolt. Detected in flowers. Isoform 4: Expressed mainly in the low bolt. Isoform 5: Expressed mainly in the 6 days old seedlings. Detected in 16 days old seedlings, axil, low bolt and floral samples, but only barely in leaves and top bolt.

This is Dormancy-associated protein 1 from Arabidopsis thaliana (Mouse-ear cress).